The following is a 670-amino-acid chain: Beta-fructofuranosidase 1 (670 aa).

Residues Met-1–Pro-40 form a disordered region. Over Met-1–Thr-44 the chain is Cytoplasmic. Positions Met-1–Gln-112 are cleaved as a propeptide — removed in mature form. A helical; Signal-anchor for type II membrane protein membrane pass occupies residues Val-45 to Ala-65. The Lumenal segment spans residues Ser-66–Leu-670. Residues Trp-136–Asp-139, Gln-155, and Trp-163 each bind substrate. Residue Asp-139 is part of the active site. An N-linked (GlcNAc...) asparagine glycan is attached at Asn-165. Substrate-binding positions include Trp-198–Ser-199 and Arg-263–Asp-264. N-linked (GlcNAc...) asparagine glycosylation occurs at Asn-275. The substrate site is built by Glu-322 and Asp-362. Asn-518 carries an N-linked (GlcNAc...) asparagine glycan. A disulfide bridge links Cys-519 with Cys-567. Residues Asn-595 and Asn-639 are each glycosylated (N-linked (GlcNAc...) asparagine).

This sequence belongs to the glycosyl hydrolase 32 family. May be present in two forms, a 70 kDa monomer and a heterodimer of the 30 kDa and 38 kDa subunits. The ratio of the levels of the two forms within cells appears to be regulated developmentally.

The protein localises to the membrane. It is found in the vacuole lumen. The enzyme catalyses Hydrolysis of terminal non-reducing beta-D-fructofuranoside residues in beta-D-fructofuranosides.. It functions in the pathway glycan biosynthesis; sucrose metabolism. The protein is Beta-fructofuranosidase 1 (IVR1) of Zea mays (Maize).